A 1131-amino-acid chain; its full sequence is DNA-directed RNA polymerase subunit beta (1131 aa).

A disordered region spans residues Q1108–E1131. The span at L1122–E1131 shows a compositional bias: basic and acidic residues.

This sequence belongs to the RNA polymerase beta chain family. In terms of assembly, in cyanobacteria the RNAP catalytic core is composed of 2 alpha, 1 beta, 1 beta', 1 gamma and 1 omega subunit. When a sigma factor is associated with the core the holoenzyme is formed, which can initiate transcription.

It carries out the reaction RNA(n) + a ribonucleoside 5'-triphosphate = RNA(n+1) + diphosphate. Its function is as follows. DNA-dependent RNA polymerase catalyzes the transcription of DNA into RNA using the four ribonucleoside triphosphates as substrates. The chain is DNA-directed RNA polymerase subunit beta from Nostoc sp. (strain PCC 7120 / SAG 25.82 / UTEX 2576).